The sequence spans 295 residues: Bifunctional protein FolD (295 aa).

NADP(+)-binding positions include 165–167, serine 192, and isoleucine 233; that span reads GRG.

This sequence belongs to the tetrahydrofolate dehydrogenase/cyclohydrolase family. In terms of assembly, homodimer.

The catalysed reaction is (6R)-5,10-methylene-5,6,7,8-tetrahydrofolate + NADP(+) = (6R)-5,10-methenyltetrahydrofolate + NADPH. It carries out the reaction (6R)-5,10-methenyltetrahydrofolate + H2O = (6R)-10-formyltetrahydrofolate + H(+). It participates in one-carbon metabolism; tetrahydrofolate interconversion. Its function is as follows. Catalyzes the oxidation of 5,10-methylenetetrahydrofolate to 5,10-methenyltetrahydrofolate and then the hydrolysis of 5,10-methenyltetrahydrofolate to 10-formyltetrahydrofolate. The chain is Bifunctional protein FolD from Tropheryma whipplei (strain TW08/27) (Whipple's bacillus).